We begin with the raw amino-acid sequence, 138 residues long: Cysteine desulfuration protein SufE (138 aa).

The Cysteine persulfide intermediate role is filled by cysteine 51.

The protein belongs to the SufE family. In terms of assembly, homodimer. Interacts with SufS.

The protein resides in the cytoplasm. It functions in the pathway cofactor biosynthesis; iron-sulfur cluster biosynthesis. Its function is as follows. Participates in cysteine desulfuration mediated by SufS. Cysteine desulfuration mobilizes sulfur from L-cysteine to yield L-alanine and constitutes an essential step in sulfur metabolism for biosynthesis of a variety of sulfur-containing biomolecules. Functions as a sulfur acceptor for SufS, by mediating the direct transfer of the sulfur atom from the S-sulfanylcysteine of SufS, an intermediate product of cysteine desulfuration process. The polypeptide is Cysteine desulfuration protein SufE (Pectobacterium carotovorum subsp. carotovorum (strain PC1)).